The primary structure comprises 776 residues: Chitin synthase 1 (776 aa).

6 helical membrane-spanning segments follow: residues 451–471, 487–507, 523–543, 558–578, 695–714, and 723–743; these read LVSLLFSFFSLSNFYLTFYFL, FWIFTLFNYLCIGVLTSLFIV, LIILLTICALYALVVGFVFVI, VLVSIVVSLLSTYGLYTLMSI, VVLFWMIANLVFIMTMVQVY, and IYLAFILWAVAVLALVRAIGS.

Belongs to the chitin synthase family.

It localises to the cell membrane. The enzyme catalyses [(1-&gt;4)-N-acetyl-beta-D-glucosaminyl](n) + UDP-N-acetyl-alpha-D-glucosamine = [(1-&gt;4)-N-acetyl-beta-D-glucosaminyl](n+1) + UDP + H(+). With respect to regulation, requires proteolytic activation. Polymerizes chitin, a structural polymer of the cell wall and septum, by transferring the sugar moiety of UDP-GlcNAc to the non-reducing end of the growing chitin polymer. Also involved in forming cross walls in the hyphal phase. The chain is Chitin synthase 1 (CHS1) from Candida albicans (Yeast).